A 604-amino-acid polypeptide reads, in one-letter code: Replication protein E1 (604 aa).

Residues 76–78 (KRK) carry the Nuclear localization signal motif. Phosphoserine; by host is present on residues Ser81 and Ser89. The Nuclear export signal motif lies at 88-97 (LSPRLQSISL). The DNA-binding region stretch occupies residues 144 to 307 (GSGDVDIHYL…TILGHNNAEA (164 aa)). Residues 406–556 (VNFIMFLAAF…FPMKSDDTPQ (151 aa)) form the SF3 helicase domain. 432-439 (GPPNSGKS) serves as a coordination point for ATP. Residue Lys513 forms a Glycyl lysine isopeptide (Lys-Gly) (interchain with G-Cter in SUMO) linkage. The segment at 578 to 604 (SDQEDEGENGESQRAFQCSAGSANEHL) is disordered. Over residues 587–604 (GESQRAFQCSAGSANEHL) the composition is skewed to polar residues.

Belongs to the papillomaviridae E1 protein family. As to quaternary structure, can form hexamers. Interacts with E2 protein; this interaction increases E1 DNA binding specificity. Interacts with host DNA polymerase subunit POLA2. Interacts with host single stranded DNA-binding protein RPA1. Interacts with host TOP1; this interaction stimulates the enzymatic activity of TOP1. Phosphorylated. In terms of processing, sumoylated.

The protein localises to the host nucleus. The enzyme catalyses Couples ATP hydrolysis with the unwinding of duplex DNA by translocating in the 3'-5' direction.. The catalysed reaction is ATP + H2O = ADP + phosphate + H(+). Functionally, ATP-dependent DNA 3'-5' helicase required for initiation of viral DNA replication. It forms a complex with the viral E2 protein. The E1-E2 complex binds to the replication origin which contains binding sites for both proteins. During the initial step, a dimer of E1 interacts with a dimer of protein E2 leading to a complex that binds the viral origin of replication with high specificity. Then, a second dimer of E1 displaces the E2 dimer in an ATP-dependent manner to form the E1 tetramer. Following this, two E1 monomers are added to each half of the site, which results in the formation of two E1 trimers on the viral ori. Subsequently, two hexamers will be created. The double hexamer acts as a bi-directional helicase machinery and unwinds the viral DNA and then recruits the host DNA polymerase to start replication. This chain is Replication protein E1, found in Homo sapiens (Human).